The primary structure comprises 538 residues: Chaperonin GroEL (538 aa).

Residues 29–32 (TLGP), 86–90 (DGTTT), Gly-413, 479–481 (DAL), and Asp-495 each bind ATP.

The protein belongs to the chaperonin (HSP60) family. Forms a cylinder of 14 subunits composed of two heptameric rings stacked back-to-back. Interacts with the co-chaperonin GroES.

It is found in the cytoplasm. The catalysed reaction is ATP + H2O + a folded polypeptide = ADP + phosphate + an unfolded polypeptide.. Its function is as follows. Together with its co-chaperonin GroES, plays an essential role in assisting protein folding. The GroEL-GroES system forms a nano-cage that allows encapsulation of the non-native substrate proteins and provides a physical environment optimized to promote and accelerate protein folding. The polypeptide is Chaperonin GroEL (Thermotoga neapolitana).